The primary structure comprises 463 residues: Glutamate--tRNA ligase 1 (463 aa).

Residues 10-20 (PSPTGYLHIGG) carry the 'HIGH' region motif. A 'KMSKS' region motif is present at residues 238 to 242 (KLSKR). An ATP-binding site is contributed by Lys241.

It belongs to the class-I aminoacyl-tRNA synthetase family. Glutamate--tRNA ligase type 1 subfamily. Monomer.

It is found in the cytoplasm. It carries out the reaction tRNA(Glu) + L-glutamate + ATP = L-glutamyl-tRNA(Glu) + AMP + diphosphate. Catalyzes the attachment of glutamate to tRNA(Glu) in a two-step reaction: glutamate is first activated by ATP to form Glu-AMP and then transferred to the acceptor end of tRNA(Glu). This chain is Glutamate--tRNA ligase 1, found in Helicobacter pylori (strain HPAG1).